The chain runs to 153 residues: UPF0540 protein At1g62220 (153 aa).

A signal peptide spans 1 to 21; sequence MNATKFVVLLVISVLCAIVTA. Disordered stretches follow at residues 63–82 and 122–153; these read SSAT…YENG and ARAN…GKKD. Positions 122–132 are enriched in low complexity; that stretch reads ARANGKVASAS. The segment covering 141 to 153 has biased composition (basic residues); that stretch reads KKGKGKKGKGKKD.

It belongs to the UPF0540 family.

The sequence is that of UPF0540 protein At1g62220 from Arabidopsis thaliana (Mouse-ear cress).